The sequence spans 175 residues: Alpha-crystallin B chain (175 aa).

An N-acetylmethionine modification is found at methionine 1. Serine 19 is modified (phosphoserine). Serine 41 carries an O-linked (GlcNAc) serine glycan. A phosphoserine mark is found at serine 45 and serine 59. The region spanning arginine 56–glutamate 164 is the sHSP domain. Zn(2+) is bound at residue histidine 83. Lysine 92 carries the N6-acetyllysine modification. Residues histidine 104, glutamate 106, histidine 111, and histidine 119 each coordinate Zn(2+). The segment at valine 142 to lysine 175 is disordered. Lysine 166 is subject to N6-acetyllysine. Threonine 170 is a glycosylation site (O-linked (GlcNAc) threonine).

Belongs to the small heat shock protein (HSP20) family. In terms of assembly, heteromer composed of three CRYAA and one CRYAB subunits. Aggregates with homologous proteins, including the small heat shock protein HSPB1, to form large heteromeric complexes. Inter-subunit bridging via zinc ions enhances stability, which is crucial as there is no protein turn over in the lens. Interacts with HSPBAP1 and TTN/titin. Interacts with TMEM109; in the cellular response to DNA damage. Interacts with DES; binds rapidly during early stages of DES filament assembly and a reduced binding seen in the later stages. Interacts with ATP6V1A and with MTOR, forming a ternary complex. Lens as well as other tissues.

It is found in the cytoplasm. Its subcellular location is the nucleus. The protein resides in the secreted. It localises to the lysosome. In terms of biological role, may contribute to the transparency and refractive index of the lens. Has chaperone-like activity, preventing aggregation of various proteins under a wide range of stress conditions. In lens epithelial cells, stabilizes the ATP6V1A protein, preventing its degradation by the proteasome. The sequence is that of Alpha-crystallin B chain (CRYAB) from Spalax judaei (Judean Mountains blind mole rat).